Here is a 139-residue protein sequence, read N- to C-terminus: Peptide methionine sulfoxide reductase MsrB (139 aa).

Residues 8 to 130 form the MsrB domain; the sequence is EREWQRELSP…NSASLQLKTD (123 aa). C47, C50, C96, and C99 together coordinate Zn(2+). Residue C119 is the Nucleophile of the active site.

It belongs to the MsrB Met sulfoxide reductase family. Requires Zn(2+) as cofactor.

The enzyme catalyses L-methionyl-[protein] + [thioredoxin]-disulfide + H2O = L-methionyl-(R)-S-oxide-[protein] + [thioredoxin]-dithiol. This is Peptide methionine sulfoxide reductase MsrB from Acinetobacter baylyi (strain ATCC 33305 / BD413 / ADP1).